Consider the following 726-residue polypeptide: PTS system glucose-specific EIICBA component (726 aa).

In terms of domain architecture, PTS EIIC type-1 spans 1–453 (MMKDTFKNVL…FNYATPGRNG (453 aa)). 9 consecutive transmembrane segments (helical) span residues 18-38 (FGKA…MISI), 62-82 (IGWG…GGSW), 90-110 (AFAA…IFGV), 139-159 (VLEA…GFVG), 184-204 (FVPF…AAFW), 311-331 (FKVG…VAIY), 344-364 (GMMI…PIEY), 365-385 (MFMF…GAAF), and 419-439 (IVNF…IANF). Residues 473-555 (GSQAVNIINL…QDILDSGEII (83 aa)) form the PTS EIIB type-1 domain. The Phosphocysteine intermediate; for EIIB activity role is filled by C495. Residues 596 to 700 (DPVFAQKMMG…ETSTVVVFTN (105 aa)) enclose the PTS EIIA type-1 domain. Catalysis depends on H648, which acts as the Tele-phosphohistidine intermediate; for EIIA activity.

The protein localises to the cell membrane. It catalyses the reaction N(pros)-phospho-L-histidyl-[protein] + D-glucose(out) = D-glucose 6-phosphate(in) + L-histidyl-[protein]. The phosphoenolpyruvate-dependent sugar phosphotransferase system (sugar PTS), a major carbohydrate active transport system, catalyzes the phosphorylation of incoming sugar substrates concomitantly with their translocation across the cell membrane. This system is involved in glucose transport. This is PTS system glucose-specific EIICBA component (exp5) from Streptococcus pneumoniae serotype 4 (strain ATCC BAA-334 / TIGR4).